A 225-amino-acid polypeptide reads, in one-letter code: DNA-binding response regulator MtrA (225 aa).

The Response regulatory domain occupies 4-117 (RILVVDDDAS…ELVARVRARL (114 aa)). 4-aspartylphosphate is present on Asp53. Residues 125-224 (AEMLSIADVD…VRGVGYKAGP (100 aa)) constitute a DNA-binding region (ompR/PhoB-type).

In terms of processing, phosphorylated by MtrB.

Its function is as follows. Member of the two-component regulatory system MtrA/MtrB. This is DNA-binding response regulator MtrA (mtrA) from Mycobacterium leprae (strain TN).